Here is a 362-residue protein sequence, read N- to C-terminus: MRRTPLYESHVSLGAKMIDFAGWEMPLQYTSINDEVATVRKNVALFDVSHMGEIFVEGEDTVEFVDYLLTNSFKNLRIGQVMYTVMCNEMGGIIDDLLTYRFGEKQAMLVVNAANIEKDFDWIVNQSKQFNVTVRNLSDQYGLIAVQGPLSERFLKTFVSDIDSLSYYTFASYSVFGKNCIVSRTGYTGEDGFEIYCHWDDTFTVWNELLQRGNNFGVKPAGLGARDVCRLEASYMLYGNDMDETTTPLEVGLSWVVKFDKDFIGKDSLIKQKELGLQKRIRGLEISDRRIARHGMYVFKGEKRVGVVTSGTFSPTLEKPVALAMLSSEIKISDEIEVDIRGSKVKAMIVKLPFYRGSVKSS.

This sequence belongs to the GcvT family. The glycine cleavage system is composed of four proteins: P, T, L and H.

The catalysed reaction is N(6)-[(R)-S(8)-aminomethyldihydrolipoyl]-L-lysyl-[protein] + (6S)-5,6,7,8-tetrahydrofolate = N(6)-[(R)-dihydrolipoyl]-L-lysyl-[protein] + (6R)-5,10-methylene-5,6,7,8-tetrahydrofolate + NH4(+). In terms of biological role, the glycine cleavage system catalyzes the degradation of glycine. This chain is Aminomethyltransferase, found in Pseudothermotoga lettingae (strain ATCC BAA-301 / DSM 14385 / NBRC 107922 / TMO) (Thermotoga lettingae).